The chain runs to 174 residues: Nucleoside-triphosphatase THEP1 (174 aa).

Residues 15–22 and 102–109 each bind ATP; these read GMPGVGKT and LAIVDEIG.

The protein belongs to the THEP1 NTPase family.

The catalysed reaction is a ribonucleoside 5'-triphosphate + H2O = a ribonucleoside 5'-diphosphate + phosphate + H(+). Its function is as follows. Has nucleotide phosphatase activity towards ATP, GTP, CTP, TTP and UTP. May hydrolyze nucleoside diphosphates with lower efficiency. In Pyrobaculum islandicum (strain DSM 4184 / JCM 9189 / GEO3), this protein is Nucleoside-triphosphatase THEP1.